The chain runs to 392 residues: 2-oxoisovalerate dehydrogenase subunit beta, mitochondrial (392 aa).

The N-terminal 50 residues, 1 to 50 (MAAVAAFAGWLLRLRAAGADGPWRRLCGAGLSRGFLQSASAYGAAAQRRQ), are a transit peptide targeting the mitochondrion. Residue Y152 participates in thiamine diphosphate binding. Residues G178, L180, T181, C228, and D231 each contribute to the K(+) site. K232 carries the N6-acetyllysine modification. N233 lines the K(+) pocket. K241 is modified (N6-acetyllysine).

Heterotetramer of 2 alpha/BCKDHA and 2 beta chains/BCKDHB that forms the branched-chain alpha-keto acid decarboxylase (E1) component of the BCKD complex. The branched-chain alpha-ketoacid dehydrogenase is a large complex composed of three major building blocks E1, E2 and E3. It is organized around E2, a 24-meric cubic core composed of DBT, to which are associated 6 to 12 copies of E1, and approximately 6 copies of the dehydrogenase E3, a DLD dimer. It depends on thiamine diphosphate as a cofactor.

The protein localises to the mitochondrion matrix. It carries out the reaction N(6)-[(R)-lipoyl]-L-lysyl-[protein] + 3-methyl-2-oxobutanoate + H(+) = N(6)-[(R)-S(8)-2-methylpropanoyldihydrolipoyl]-L-lysyl-[protein] + CO2. In terms of biological role, together with BCKDHA forms the heterotetrameric E1 subunit of the mitochondrial branched-chain alpha-ketoacid dehydrogenase (BCKD) complex. The BCKD complex catalyzes the multi-step oxidative decarboxylation of alpha-ketoacids derived from the branched-chain amino-acids valine, leucine and isoleucine producing CO2 and acyl-CoA which is subsequently utilized to produce energy. The E1 subunit catalyzes the first step with the decarboxylation of the alpha-ketoacid forming an enzyme-product intermediate. A reductive acylation mediated by the lipoylamide cofactor of E2 extracts the acyl group from the E1 active site for the next step of the reaction. The protein is 2-oxoisovalerate dehydrogenase subunit beta, mitochondrial (BCKDHB) of Bos taurus (Bovine).